Consider the following 935-residue polypeptide: Protein translocase subunit SecA (935 aa).

Residues glutamine 90, 108 to 112, and aspartate 504 contribute to the ATP site; that span reads GEGKT. The tract at residues 543 to 568 is disordered; it reads GGRRPQGFGTSKKKGKNWSPSDADIF.

Belongs to the SecA family. Monomer and homodimer. Part of the essential Sec protein translocation apparatus which comprises SecA, SecYEG and auxiliary proteins SecDF. Other proteins may also be involved.

The protein resides in the cell inner membrane. It localises to the cellular thylakoid membrane. The protein localises to the cytoplasm. It carries out the reaction ATP + H2O + cellular proteinSide 1 = ADP + phosphate + cellular proteinSide 2.. In terms of biological role, part of the Sec protein translocase complex. Interacts with the SecYEG preprotein conducting channel. Has a central role in coupling the hydrolysis of ATP to the transfer of proteins into and across the cell membrane, serving as an ATP-driven molecular motor driving the stepwise translocation of polypeptide chains across the membrane. Its function is as follows. Probably participates in protein translocation into and across both the cytoplasmic and thylakoid membranes in cyanobacterial cells. The chain is Protein translocase subunit SecA from Rippkaea orientalis (strain PCC 8801 / RF-1) (Cyanothece sp. (strain PCC 8801)).